Here is an 881-residue protein sequence, read N- to C-terminus: Plakophilin-2 (881 aa).

The required for interaction with influenza A virus RNA polymerase subunit PB1 stretch occupies residues 1–348 (MAAPGAPAEY…FTDSQLGNAD (348 aa)). The interval 1–360 (MAAPGAPAEY…MTLERAVSML (360 aa)) is required for binding to single-stranded DNA. A Phosphoserine modification is found at serine 44. Residue arginine 46 is modified to Omega-N-methylarginine. A Phosphoserine; by MARK3 modification is found at serine 82. Serine 132, serine 135, serine 151, serine 154, serine 155, serine 169, and serine 172 each carry phosphoserine. Position 177 is a phosphothreonine (threonine 177). Residues serine 183, serine 197, serine 251, serine 294, and serine 329 each carry the phosphoserine modification. The interval 282 to 314 (QNRASRSSWHQSSFHSTRTLREAGPSVAVDSSG) is disordered. A compositionally biased stretch (low complexity) spans 286–297 (SRSSWHQSSFHS). ARM repeat units follow at residues 341-383 (DSQL…ECFQ), 385-424 (SEAR…NLVF), 427-467 (NDNK…NLRS), 571-616 (DGRK…NLSY), 671-711 (PKGV…NLTA), 719-758 (SVAQ…NLSR), 763-804 (QNEI…NIIQ), and 807-849 (YQNA…SLWA).

Belongs to the beta-catenin family. In terms of assembly, interacts with DSC2. Interacts with JUP. Interacts with KRT5/CK5, KRT8/CK8, KRT14/CK14, KRT18/CK18 and VIM. Interacts (via N-terminus) with MARK3/C-TAK1. Interacts with DSP. Interacts with DSG1, DSG2 and DSG3. Interacts (via N-terminus) with CTNNB1. Interacts with CDH1. Interacts with the RNA polymerase III (Pol III) complex proteins POLR3A/RPC155, POLR3F/RPC39 and POLR3C/RPC82. Interacts with CTNNA3. Interacts (via N-terminus) with SCN5A/Nav1.5. Interacts with ANK3/ANKG and GJA1/CX43. (Microbial infection) Interacts (via N-terminus) with influenza A virus RNA polymerase subunit PB1 (via C-terminus); the interaction competitively inhibits the interaction between the subunits PB1 and PB2. As to expression, expressed at intercalated disks in the heart (at protein level). Expressed in gingival epithelial, endothelial and fibroblast cells (at protein level). Faintly expressed in tracheal epithelial cells (at protein level). Widely expressed. Found at desmosomal plaques in simple and stratified epithelia and in non-epithelial tissues such as myocardium and lymph node follicles. In most stratified epithelia found in the desmosomes of the basal cell layer and seems to be absent from suprabasal strata. In terms of tissue distribution, (Microbial infection) Abundantly expressed in tracheal epithelial cells following influenza A virus infection (at protein level).

The protein localises to the nucleus. It localises to the cell junction. It is found in the desmosome. The protein resides in the cytoplasm. Functionally, a component of desmosome cell-cell junctions which are required for positive regulation of cellular adhesion. Regulates focal adhesion turnover resulting in changes in focal adhesion size, cell adhesion and cell spreading, potentially via transcriptional modulation of beta-integrins. Required to maintain gingival epithelial barrier function. Important component of the desmosome that is also required for localization of desmosome component proteins such as DSC2, DSG2 and JUP to the desmosome cell-cell junction. Required for the formation of desmosome cell junctions in cardiomyocytes, thereby required for the correct formation of the heart, specifically trabeculation and formation of the atria walls. Loss of desmosome cell junctions leads to mis-localization of DSP and DSG2 resulting in disruption of cell-cell adhesion and disordered intermediate filaments. Modulates profibrotic gene expression in cardiomyocytes via regulation of DSP expression and subsequent activation of downstream TGFB1 and MAPK14/p38 MAPK signaling. Required for cardiac sodium current propagation and electrical synchrony in cardiac myocytes, via ANK3 stabilization and modulation of SCN5A/Nav1.5 localization to cell-cell junctions. Required for mitochondrial function, nuclear envelope integrity and positive regulation of SIRT3 transcription via maintaining DES localization at its nuclear envelope and cell tip anchoring points, and thereby preserving regulation of the transcriptional program. Maintenance of nuclear envelope integrity protects against DNA damage and transcriptional dysregulation of genes, especially those involved in the electron transport chain, thereby preserving mitochondrial function and protecting against superoxide radical anion generation. Binds single-stranded DNA (ssDNA). May regulate the localization of GJA1 to gap junctions in intercalated disks of the heart. Involved in the inhibition of viral infection by influenza A viruses (IAV). Acts as a host restriction factor for IAV viral propagation, potentially via disrupting the interaction of IAV polymerase complex proteins. In Homo sapiens (Human), this protein is Plakophilin-2.